A 97-amino-acid chain; its full sequence is Essential MCU regulator, mitochondrial (97 aa).

Residues 1–35 constitute a mitochondrion transit peptide; sequence MIVPRLALPISLALQRVSRRVAEHPHNLRILQRHM. Residues 53–73 traverse the membrane as a helical segment; the sequence is PFGLLAIFCAVIPGLFVGATI.

It belongs to the SMDT1/EMRE family.

The protein resides in the mitochondrion inner membrane. Its function is as follows. Essential regulatory subunit of the mitochondrial calcium uniporter MCU channel, a protein that mediates calcium uptake into mitochondria. The sequence is that of Essential MCU regulator, mitochondrial from Drosophila melanogaster (Fruit fly).